Consider the following 240-residue polypeptide: MVERDNELKGTTFTISVLHISDGKPERIRQLLAAKVAQAPQFFNCAPLVINVERLTDIPDFEQLKELVESEDFVLVGITGAQSEAMKTAAKAAGLAVMASGKSRKAEPQPQPEPAPTPAPIVEVKAVPAPLVASKVHVGPVRSGQQLYAAGTSLVVLGSVSPGAEVIADDSIHIYGTLRGRAIAGAKGNPQARIYCQQLQAELLSIAGTFQLSDALPAGLIQQPVHVRLDNEQLRIDRIK.

This sequence belongs to the MinC family. As to quaternary structure, interacts with MinD and FtsZ.

Cell division inhibitor that blocks the formation of polar Z ring septums. Rapidly oscillates between the poles of the cell to destabilize FtsZ filaments that have formed before they mature into polar Z rings. Prevents FtsZ polymerization. This is Probable septum site-determining protein MinC from Aeromonas hydrophila subsp. hydrophila (strain ATCC 7966 / DSM 30187 / BCRC 13018 / CCUG 14551 / JCM 1027 / KCTC 2358 / NCIMB 9240 / NCTC 8049).